The primary structure comprises 1137 residues: Voltage-dependent calcium channel subunit alpha-2/delta-4 (1137 aa).

The first 19 residues, 1–19 (MVCGCSALLPLPNPRPTMP), serve as a signal peptide directing secretion. At 20–1115 (ATPNFLANPS…AQDCGGASDT (1096 aa)) the chain is on the extracellular side. Asn201 carries N-linked (GlcNAc...) asparagine glycosylation. A VWFA domain is found at 291-473 (DIVILVDVSG…ENVMEYLHVL (183 aa)). 3 residues coordinate a divalent metal cation: Asp297, Ser299, and Ser301. An MIDAS-like motif motif is present at residues 297–301 (DVSGS). A disulfide bridge links Cys447 with Cys1097. The Cache domain maps to 487 to 580 (WTEAYMDSKL…RPLYREGKKL (94 aa)). Asn664 carries an N-linked (GlcNAc...) asparagine glycan. Residues 1116-1136 (SASPPLLLLPVCAWGLLPQLL) traverse the membrane as a helical segment. Arg1137 is a topological domain (cytoplasmic).

This sequence belongs to the calcium channel subunit alpha-2/delta family. In terms of assembly, dimer formed of alpha-2-2 and delta-2 chains; disulfide-linked. Voltage-dependent calcium channels are multisubunit complexes, consisting of alpha-1 (CACNA1), alpha-2 (CACNA2D), beta (CACNB) and delta (CACNA2D) subunits in a 1:1:1:1 ratio. Interacts with CACNA1C and CACNB3. In terms of processing, may be proteolytically processed into subunits alpha-2-4 and delta-4 that are disulfide-linked. It is however unclear whether such cleavage really takes place in vivo and has a functional role. Predominantly expressed in certain types of endocrine cells. Present in the Paneth cells of the small intestine. Also present in the erythroblasts in the fetal liver, in the cells of the zona reticularis of the adrenal gland and in the basophils of the pituitary. Present at low level in some brain regions such as the cerebellum (at protein level).

Its subcellular location is the membrane. Its function is as follows. The alpha-2/delta subunit of voltage-dependent calcium channels regulates calcium current density and activation/inactivation kinetics of the calcium channel. The polypeptide is Voltage-dependent calcium channel subunit alpha-2/delta-4 (CACNA2D4) (Homo sapiens (Human)).